The following is a 100-amino-acid chain: Urease subunit gamma (100 aa).

Belongs to the urease gamma subunit family. Heterotrimer of UreA (gamma), UreB (beta) and UreC (alpha) subunits. Three heterotrimers associate to form the active enzyme. Although not discussed in the published references, Met-1 is represented in the submitted PDB entries as being modified by either a formyl, a carboxyl, or an acetyl group. The N-terminal is probably N-(dihydroxymethyl)methionine, the hydrated form of N-formylmethionine.

Its subcellular location is the cytoplasm. The enzyme catalyses urea + 2 H2O + H(+) = hydrogencarbonate + 2 NH4(+). It participates in nitrogen metabolism; urea degradation; CO(2) and NH(3) from urea (urease route): step 1/1. This Sporosarcina pasteurii (Bacillus pasteurii) protein is Urease subunit gamma.